The sequence spans 301 residues: 4-hydroxybenzoate octaprenyltransferase (301 aa).

8 helical membrane-spanning segments follow: residues 34-54 (IGSL…ADGL), 57-77 (LWTL…GCVI), 108-128 (LWVF…LNWL), 152-172 (LPQV…FAAV), 176-196 (VPLL…AYDT), 221-241 (FDLI…VLVG), 245-265 (DLGV…AYEF), and 279-299 (AFLH…VAVA).

This sequence belongs to the UbiA prenyltransferase family. Requires Mg(2+) as cofactor.

The protein resides in the cell inner membrane. The catalysed reaction is all-trans-octaprenyl diphosphate + 4-hydroxybenzoate = 4-hydroxy-3-(all-trans-octaprenyl)benzoate + diphosphate. It participates in cofactor biosynthesis; ubiquinone biosynthesis. Functionally, catalyzes the prenylation of para-hydroxybenzoate (PHB) with an all-trans polyprenyl group. Mediates the second step in the final reaction sequence of ubiquinone-8 (UQ-8) biosynthesis, which is the condensation of the polyisoprenoid side chain with PHB, generating the first membrane-bound Q intermediate 3-octaprenyl-4-hydroxybenzoate. This Xanthomonas euvesicatoria pv. vesicatoria (strain 85-10) (Xanthomonas campestris pv. vesicatoria) protein is 4-hydroxybenzoate octaprenyltransferase.